The following is a 440-amino-acid chain: Oligodendrocyte-myelin glycoprotein (440 aa).

An N-terminal signal peptide occupies residues 1–24 (MEYQILKMSSCLFILLFLTPGILC). The region spanning 25-55 (ICPLQCTCTERHRHVDCSGRNLTTLPPGLQE) is the LRRNT domain. N-linked (GlcNAc...) asparagine glycosylation is found at N45 and N61. LRR repeat units follow at residues 56–78 (NIIH…TPYT), 79–100 (NLRT…LPRS), 101–121 (LWNM…DTAY), 124–145 (NLKY…KNTL), 147–168 (SLEV…MPSK), 169–189 (LHIV…TLIN), 192–213 (NLTH…SFDQ), and 216–239 (QLQE…TYLL). Residue N103 is glycosylated (N-linked (GlcNAc...) asparagine). N152, N176, N189, N192, and N234 each carry an N-linked (GlcNAc...) asparagine glycan. 5 Ser/Thr-rich repeats span residues 229–270 (CDHK…YPTP), 271–292 (PGFT…INSL), 293–335 (SMVT…VAYP), 336–377 (EDTP…PPSP), and 378–416 (VTLS…TRPP). N364 and N389 each carry an N-linked (GlcNAc...) asparagine glycan. S417 carries GPI-anchor amidated serine lipidation. The propeptide at 418 to 440 (AASAWKVNASLLLMLNAVVMLAG) is removed in mature form. Residue N425 is glycosylated (N-linked (GlcNAc...) asparagine).

As to quaternary structure, binds to RTN4R. In terms of processing, O-glycosylated in its Ser/Thr-rich repeat domain. In terms of tissue distribution, oligodendrocytes and myelin of the central nervous system.

It is found in the cell membrane. Its function is as follows. Cell adhesion molecule contributing to the interactive process required for myelination in the central nervous system. This chain is Oligodendrocyte-myelin glycoprotein (Omg), found in Mus musculus (Mouse).